A 589-amino-acid polypeptide reads, in one-letter code: V-type ATP synthase alpha chain (589 aa).

239–246 (GPFGAGKT) lines the ATP pocket.

The protein belongs to the ATPase alpha/beta chains family.

The enzyme catalyses ATP + H2O + 4 H(+)(in) = ADP + phosphate + 5 H(+)(out). In terms of biological role, produces ATP from ADP in the presence of a proton gradient across the membrane. The V-type alpha chain is a catalytic subunit. This Treponema denticola (strain ATCC 35405 / DSM 14222 / CIP 103919 / JCM 8153 / KCTC 15104) protein is V-type ATP synthase alpha chain.